Here is a 212-residue protein sequence, read N- to C-terminus: MQTVAVIDYGMGNLHSVAKALEHVGAGRVLITSDAKVIREADRVVFPGVGAIRDCMAEIRRLGFDSLVREVSQDRPFLGICVGMQALLDRSEESGGVDCIGLFPGQVKFFGKDLYEEGEHLKVPHMGWNQVAQAVDHPLWHDIPDLARFYFVHSFYIDAANQRQVVGRGHYGLDFAAALADGSRFAVQFHPEKSHTHGLQLLQNFAAWDGRW.

The Glutamine amidotransferase type-1 domain occupies 3 to 212 (TVAVIDYGMG…QNFAAWDGRW (210 aa)). Cysteine 81 acts as the Nucleophile in catalysis. Residues histidine 190 and glutamate 192 contribute to the active site.

In terms of assembly, heterodimer of HisH and HisF.

It is found in the cytoplasm. The catalysed reaction is 5-[(5-phospho-1-deoxy-D-ribulos-1-ylimino)methylamino]-1-(5-phospho-beta-D-ribosyl)imidazole-4-carboxamide + L-glutamine = D-erythro-1-(imidazol-4-yl)glycerol 3-phosphate + 5-amino-1-(5-phospho-beta-D-ribosyl)imidazole-4-carboxamide + L-glutamate + H(+). The enzyme catalyses L-glutamine + H2O = L-glutamate + NH4(+). The protein operates within amino-acid biosynthesis; L-histidine biosynthesis; L-histidine from 5-phospho-alpha-D-ribose 1-diphosphate: step 5/9. IGPS catalyzes the conversion of PRFAR and glutamine to IGP, AICAR and glutamate. The HisH subunit catalyzes the hydrolysis of glutamine to glutamate and ammonia as part of the synthesis of IGP and AICAR. The resulting ammonia molecule is channeled to the active site of HisF. The protein is Imidazole glycerol phosphate synthase subunit HisH of Pseudomonas savastanoi pv. phaseolicola (strain 1448A / Race 6) (Pseudomonas syringae pv. phaseolicola (strain 1448A / Race 6)).